The chain runs to 20 residues: FIGTALGIASAIPAIVKLFK.

Lysine 20 is subject to Lysine amide.

As to expression, expressed by the venom gland.

It localises to the secreted. Its subcellular location is the target cell membrane. Has activity against Gram-positive bacteria. Has insecticidal and hemolytic activities. May act by disrupting the integrity of the bacterial cell membrane. The polypeptide is M-poneritoxin-Ng1f (Neoponera goeldii (Ponerine ant)).